Consider the following 464-residue polypeptide: 17,18-epoxy-17-hydroxycur-19-ene N-malonyltransferase (464 aa).

Catalysis depends on proton acceptor residues His-191 and Asp-403.

It belongs to the plant acyltransferase family. In terms of assembly, monomer. As to expression, mainly expressed in roots.

The protein resides in the cytoplasm. The enzyme catalyses 17,18-epoxy-17-hydroxycur-19-ene + malonyl-CoA = prestrychnine + CoA. The protein operates within alkaloid biosynthesis. In terms of biological role, malonylransferase involved in the biosynthesis of curare monoterpene indole alkaloids (MIAs), natural products such as strychnine, a neurotoxic compound used as a pesticide to control rodents, and its pharmacologically active derivatives, including brucine, used to regulate blood pressure. Curare alkaloids act as animal glycine receptor antagonists. Catalyzes the conversion of 17,18-epoxy-17-hydroxycur-19-ene (Wieland-Gumlich aldehyde) to prestrychnine, which is spontaneously converted into strychnine and isostrychnine. The sequence is that of 17,18-epoxy-17-hydroxycur-19-ene N-malonyltransferase from Strychnos nux-vomica (Poison nut).